A 288-amino-acid polypeptide reads, in one-letter code: 4-diphosphocytidyl-2-C-methyl-D-erythritol kinase (288 aa).

Lys-8 is an active-site residue. Pro-90 to Ser-100 is a binding site for ATP. Asp-132 is a catalytic residue.

The protein belongs to the GHMP kinase family. IspE subfamily.

The catalysed reaction is 4-CDP-2-C-methyl-D-erythritol + ATP = 4-CDP-2-C-methyl-D-erythritol 2-phosphate + ADP + H(+). It participates in isoprenoid biosynthesis; isopentenyl diphosphate biosynthesis via DXP pathway; isopentenyl diphosphate from 1-deoxy-D-xylulose 5-phosphate: step 3/6. In terms of biological role, catalyzes the phosphorylation of the position 2 hydroxy group of 4-diphosphocytidyl-2C-methyl-D-erythritol. The polypeptide is 4-diphosphocytidyl-2-C-methyl-D-erythritol kinase (Chlamydia trachomatis serovar A (strain ATCC VR-571B / DSM 19440 / HAR-13)).